We begin with the raw amino-acid sequence, 100 residues long: Putative membrane protein insertion efficiency factor (100 aa).

The segment at 73-100 (DPVPDLPGSAPEENGRPSPDGQHSGSGG) is disordered.

The protein belongs to the UPF0161 family.

Its subcellular location is the cell inner membrane. Its function is as follows. Could be involved in insertion of integral membrane proteins into the membrane. This is Putative membrane protein insertion efficiency factor from Synechococcus sp. (strain JA-3-3Ab) (Cyanobacteria bacterium Yellowstone A-Prime).